We begin with the raw amino-acid sequence, 179 residues long: Ribosome-recycling factor (179 aa).

The protein belongs to the RRF family.

The protein resides in the cytoplasm. Responsible for the release of ribosomes from messenger RNA at the termination of protein biosynthesis. May increase the efficiency of translation by recycling ribosomes from one round of translation to another. The sequence is that of Ribosome-recycling factor from Chlamydia trachomatis serovar D (strain ATCC VR-885 / DSM 19411 / UW-3/Cx).